A 264-amino-acid polypeptide reads, in one-letter code: tRNA pseudouridine synthase A (264 aa).

The active-site Nucleophile is the Asp-51. Residue Tyr-109 participates in substrate binding.

The protein belongs to the tRNA pseudouridine synthase TruA family. In terms of assembly, homodimer.

It carries out the reaction uridine(38/39/40) in tRNA = pseudouridine(38/39/40) in tRNA. Its function is as follows. Formation of pseudouridine at positions 38, 39 and 40 in the anticodon stem and loop of transfer RNAs. This is tRNA pseudouridine synthase A from Vibrio parahaemolyticus serotype O3:K6 (strain RIMD 2210633).